We begin with the raw amino-acid sequence, 156 residues long: Small ribosomal subunit protein uS7 (156 aa).

This sequence belongs to the universal ribosomal protein uS7 family. Part of the 30S ribosomal subunit. Contacts proteins S9 and S11.

Functionally, one of the primary rRNA binding proteins, it binds directly to 16S rRNA where it nucleates assembly of the head domain of the 30S subunit. Is located at the subunit interface close to the decoding center, probably blocks exit of the E-site tRNA. In Treponema pallidum (strain Nichols), this protein is Small ribosomal subunit protein uS7.